A 342-amino-acid polypeptide reads, in one-letter code: Methionine import ATP-binding protein MetN 2 (342 aa).

Residues Ile-2–Val-241 enclose the ABC transporter domain. Gly-38 to Ser-45 provides a ligand contact to ATP.

Belongs to the ABC transporter superfamily. Methionine importer (TC 3.A.1.24) family. As to quaternary structure, the complex is composed of two ATP-binding proteins (MetN), two transmembrane proteins (MetI) and a solute-binding protein (MetQ).

It localises to the cell membrane. It catalyses the reaction L-methionine(out) + ATP + H2O = L-methionine(in) + ADP + phosphate + H(+). The enzyme catalyses D-methionine(out) + ATP + H2O = D-methionine(in) + ADP + phosphate + H(+). Part of the ABC transporter complex MetNIQ involved in methionine import. Responsible for energy coupling to the transport system. In Oceanobacillus iheyensis (strain DSM 14371 / CIP 107618 / JCM 11309 / KCTC 3954 / HTE831), this protein is Methionine import ATP-binding protein MetN 2.